A 206-amino-acid chain; its full sequence is Large ribosomal subunit protein uL4 (206 aa).

Positions Lys-49–Arg-73 are disordered.

Belongs to the universal ribosomal protein uL4 family. Part of the 50S ribosomal subunit.

Its function is as follows. One of the primary rRNA binding proteins, this protein initially binds near the 5'-end of the 23S rRNA. It is important during the early stages of 50S assembly. It makes multiple contacts with different domains of the 23S rRNA in the assembled 50S subunit and ribosome. Functionally, forms part of the polypeptide exit tunnel. The polypeptide is Large ribosomal subunit protein uL4 (Paramagnetospirillum magneticum (strain ATCC 700264 / AMB-1) (Magnetospirillum magneticum)).